Here is a 398-residue protein sequence, read N- to C-terminus: Bifunctional enzyme IspD/IspF (398 aa).

The 2-C-methyl-D-erythritol 4-phosphate cytidylyltransferase stretch occupies residues 1–234 (MSNSKRTAAI…SRLGALLGDI (234 aa)). The interval 235–398 (RTGTGYDVHA…LPWGTNGLAD (164 aa)) is 2-C-methyl-D-erythritol 2,4-cyclodiphosphate synthase. 2 residues coordinate a divalent metal cation: Asp-241 and His-243. 4-CDP-2-C-methyl-D-erythritol 2-phosphate contacts are provided by residues 241-243 (DVH) and 267-268 (HS). His-275 contributes to the a divalent metal cation binding site. 4-CDP-2-C-methyl-D-erythritol 2-phosphate is bound by residues 289 to 291 (DIG), 365 to 368 (TTSE), Phe-372, and Arg-375.

This sequence in the N-terminal section; belongs to the IspD/TarI cytidylyltransferase family. IspD subfamily. In the C-terminal section; belongs to the IspF family. A divalent metal cation is required as a cofactor.

It catalyses the reaction 2-C-methyl-D-erythritol 4-phosphate + CTP + H(+) = 4-CDP-2-C-methyl-D-erythritol + diphosphate. It carries out the reaction 4-CDP-2-C-methyl-D-erythritol 2-phosphate = 2-C-methyl-D-erythritol 2,4-cyclic diphosphate + CMP. The protein operates within isoprenoid biosynthesis; isopentenyl diphosphate biosynthesis via DXP pathway; isopentenyl diphosphate from 1-deoxy-D-xylulose 5-phosphate: step 2/6. Its pathway is isoprenoid biosynthesis; isopentenyl diphosphate biosynthesis via DXP pathway; isopentenyl diphosphate from 1-deoxy-D-xylulose 5-phosphate: step 4/6. Its function is as follows. Bifunctional enzyme that catalyzes the formation of 4-diphosphocytidyl-2-C-methyl-D-erythritol from CTP and 2-C-methyl-D-erythritol 4-phosphate (MEP) (IspD), and catalyzes the conversion of 4-diphosphocytidyl-2-C-methyl-D-erythritol 2-phosphate (CDP-ME2P) to 2-C-methyl-D-erythritol 2,4-cyclodiphosphate (ME-CPP) with a corresponding release of cytidine 5-monophosphate (CMP) (IspF). The sequence is that of Bifunctional enzyme IspD/IspF from Rhodopseudomonas palustris (strain BisB18).